Here is a 56-residue protein sequence, read N- to C-terminus: Large ribosomal subunit protein bL33 (56 aa).

This sequence belongs to the bacterial ribosomal protein bL33 family.

This chain is Large ribosomal subunit protein bL33, found in Halorhodospira halophila (strain DSM 244 / SL1) (Ectothiorhodospira halophila (strain DSM 244 / SL1)).